A 468-amino-acid polypeptide reads, in one-letter code: Siroheme synthase 3 (468 aa).

The precorrin-2 dehydrogenase /sirohydrochlorin ferrochelatase stretch occupies residues 1–204; the sequence is MDYLPIFCRL…GDSASANQLA (204 aa). Residues 22–23 and 43–44 each bind NAD(+); these read EV and PE. A Phosphoserine modification is found at serine 128. A uroporphyrinogen-III C-methyltransferase region spans residues 216 to 468; the sequence is GEVVLVGAGP…GAADAALASA (253 aa). Proline 225 provides a ligand contact to S-adenosyl-L-methionine. Aspartate 248 (proton acceptor) is an active-site residue. Catalysis depends on lysine 270, which acts as the Proton donor. S-adenosyl-L-methionine contacts are provided by residues 301–303, isoleucine 306, 331–332, methionine 383, and glycine 412; these read GGD and TA.

In the N-terminal section; belongs to the precorrin-2 dehydrogenase / sirohydrochlorin ferrochelatase family. It in the C-terminal section; belongs to the precorrin methyltransferase family.

It carries out the reaction uroporphyrinogen III + 2 S-adenosyl-L-methionine = precorrin-2 + 2 S-adenosyl-L-homocysteine + H(+). It catalyses the reaction precorrin-2 + NAD(+) = sirohydrochlorin + NADH + 2 H(+). The catalysed reaction is siroheme + 2 H(+) = sirohydrochlorin + Fe(2+). It participates in cofactor biosynthesis; adenosylcobalamin biosynthesis; precorrin-2 from uroporphyrinogen III: step 1/1. The protein operates within cofactor biosynthesis; adenosylcobalamin biosynthesis; sirohydrochlorin from precorrin-2: step 1/1. Its pathway is porphyrin-containing compound metabolism; siroheme biosynthesis; precorrin-2 from uroporphyrinogen III: step 1/1. It functions in the pathway porphyrin-containing compound metabolism; siroheme biosynthesis; siroheme from sirohydrochlorin: step 1/1. It participates in porphyrin-containing compound metabolism; siroheme biosynthesis; sirohydrochlorin from precorrin-2: step 1/1. Its function is as follows. Multifunctional enzyme that catalyzes the SAM-dependent methylations of uroporphyrinogen III at position C-2 and C-7 to form precorrin-2 via precorrin-1. Then it catalyzes the NAD-dependent ring dehydrogenation of precorrin-2 to yield sirohydrochlorin. Finally, it catalyzes the ferrochelation of sirohydrochlorin to yield siroheme. The polypeptide is Siroheme synthase 3 (Aeromonas hydrophila subsp. hydrophila (strain ATCC 7966 / DSM 30187 / BCRC 13018 / CCUG 14551 / JCM 1027 / KCTC 2358 / NCIMB 9240 / NCTC 8049)).